The following is a 139-amino-acid chain: Large ribosomal subunit protein uL16 (139 aa).

Basic residues predominate over residues methionine 1–glycine 19. Positions methionine 1–threonine 25 are disordered.

Belongs to the universal ribosomal protein uL16 family. As to quaternary structure, part of the 50S ribosomal subunit.

Binds 23S rRNA and is also seen to make contacts with the A and possibly P site tRNAs. This is Large ribosomal subunit protein uL16 from Streptomyces griseus subsp. griseus (strain JCM 4626 / CBS 651.72 / NBRC 13350 / KCC S-0626 / ISP 5235).